The sequence spans 243 residues: uncharacterized protein (243 aa).

Residues 207–224 (KKTSISGYKTLDVKRKFV) carry the Bipartite nuclear localization signal motif.

This is an uncharacterized protein from Acheta domesticus (House cricket).